The primary structure comprises 560 residues: DNA ligase B (560 aa).

K124 acts as the N6-AMP-lysine intermediate in catalysis.

It belongs to the NAD-dependent DNA ligase family. LigB subfamily.

It carries out the reaction NAD(+) + (deoxyribonucleotide)n-3'-hydroxyl + 5'-phospho-(deoxyribonucleotide)m = (deoxyribonucleotide)n+m + AMP + beta-nicotinamide D-nucleotide.. In terms of biological role, catalyzes the formation of phosphodiester linkages between 5'-phosphoryl and 3'-hydroxyl groups in double-stranded DNA using NAD as a coenzyme and as the energy source for the reaction. The polypeptide is DNA ligase B (Escherichia coli O6:K15:H31 (strain 536 / UPEC)).